The chain runs to 212 residues: Ribonuclease HII (212 aa).

The region spanning 22–211 is the RNase H type-2 domain; that stretch reads GLVAGVDEVG…VADRILLQNT (190 aa). A divalent metal cation contacts are provided by Asp28, Glu29, and Asp120.

The protein belongs to the RNase HII family. Mn(2+) serves as cofactor. The cofactor is Mg(2+).

Its subcellular location is the cytoplasm. It catalyses the reaction Endonucleolytic cleavage to 5'-phosphomonoester.. Its function is as follows. Endonuclease that specifically degrades the RNA of RNA-DNA hybrids. In Shewanella frigidimarina (strain NCIMB 400), this protein is Ribonuclease HII.